We begin with the raw amino-acid sequence, 276 residues long: 2-dehydro-3-deoxyphosphooctonate aldolase (276 aa).

The protein belongs to the KdsA family.

The protein resides in the cytoplasm. It catalyses the reaction D-arabinose 5-phosphate + phosphoenolpyruvate + H2O = 3-deoxy-alpha-D-manno-2-octulosonate-8-phosphate + phosphate. It functions in the pathway carbohydrate biosynthesis; 3-deoxy-D-manno-octulosonate biosynthesis; 3-deoxy-D-manno-octulosonate from D-ribulose 5-phosphate: step 2/3. Its pathway is bacterial outer membrane biogenesis; lipopolysaccharide biosynthesis. The chain is 2-dehydro-3-deoxyphosphooctonate aldolase from Xanthomonas oryzae pv. oryzae (strain MAFF 311018).